We begin with the raw amino-acid sequence, 204 residues long: Large ribosomal subunit protein eL15 (204 aa).

The N-myristoyl glycine moiety is linked to residue glycine 2. Serine 34 carries the post-translational modification Phosphoserine. Lysine 83 is covalently cross-linked (Glycyl lysine isopeptide (Lys-Gly) (interchain with G-Cter in SUMO2)). 2 positions are modified to phosphoserine: serine 97 and serine 100. The interval 165 to 186 (TSAGRKSRGLGKGHKFHHTIGG) is disordered. Over residues 169–182 (RKSRGLGKGHKFHH) the composition is skewed to basic residues.

It belongs to the eukaryotic ribosomal protein eL15 family. Component of the large ribosomal subunit. Interacts with IFIT1 (via TPR repeats 1-4).

Its subcellular location is the cytoplasm. Functionally, component of the large ribosomal subunit. The ribosome is a large ribonucleoprotein complex responsible for the synthesis of proteins in the cell. The polypeptide is Large ribosomal subunit protein eL15 (RPL15) (Bos taurus (Bovine)).